The following is a 316-amino-acid chain: Ribosomal RNA small subunit methyltransferase H (316 aa).

S-adenosyl-L-methionine is bound by residues 35–37, D55, F84, D105, and Q112; that span reads SGH.

The protein belongs to the methyltransferase superfamily. RsmH family.

It localises to the cytoplasm. It carries out the reaction cytidine(1402) in 16S rRNA + S-adenosyl-L-methionine = N(4)-methylcytidine(1402) in 16S rRNA + S-adenosyl-L-homocysteine + H(+). In terms of biological role, specifically methylates the N4 position of cytidine in position 1402 (C1402) of 16S rRNA. The protein is Ribosomal RNA small subunit methyltransferase H of Streptococcus equi subsp. zooepidemicus (strain H70).